A 231-amino-acid polypeptide reads, in one-letter code: Homeobox protein engrailed-1a (231 aa).

Disordered stretches follow at residues 1-29 (MEDQRRGQGEEEDDSGSLPSPPLLPAHRN), 43-105 (GCKR…KDSQ), and 121-148 (DRPSSGPRTRKLKKKNNNTESDDKRPRT). Over residues 43 to 56 (GCKRERERVTRDSG) the composition is skewed to basic and acidic residues. A compositionally biased stretch (low complexity) spans 68–102 (DGVSSSASSTVSSPVSSRQSNKVEQGSSKSSSPSK). The homeobox DNA-binding region spans 143–202 (DKRPRTAFTAEQLQRLKAEFQTSRYITEQRRQALARELGLNESQIKIWFQNKRAKIKKSS).

This sequence belongs to the engrailed homeobox family.

The protein resides in the nucleus. The protein is Homeobox protein engrailed-1a (eng1a) of Danio rerio (Zebrafish).